The sequence spans 372 residues: Queuine tRNA-ribosyltransferase (372 aa).

The Proton acceptor role is filled by Asp92. Residues Asp92–Tyr96, Asp146, Gln188, and Gly215 contribute to the substrate site. Positions Gly246 to Glu252 are RNA binding. The active-site Nucleophile is Asp265. The segment at Thr270 to Arg274 is RNA binding; important for wobble base 34 recognition. 4 residues coordinate Zn(2+): Cys303, Cys305, Cys308, and His334.

This sequence belongs to the queuine tRNA-ribosyltransferase family. Homodimer. Within each dimer, one monomer is responsible for RNA recognition and catalysis, while the other monomer binds to the replacement base PreQ1. The cofactor is Zn(2+).

It catalyses the reaction 7-aminomethyl-7-carbaguanine + guanosine(34) in tRNA = 7-aminomethyl-7-carbaguanosine(34) in tRNA + guanine. Its pathway is tRNA modification; tRNA-queuosine biosynthesis. Functionally, catalyzes the base-exchange of a guanine (G) residue with the queuine precursor 7-aminomethyl-7-deazaguanine (PreQ1) at position 34 (anticodon wobble position) in tRNAs with GU(N) anticodons (tRNA-Asp, -Asn, -His and -Tyr). Catalysis occurs through a double-displacement mechanism. The nucleophile active site attacks the C1' of nucleotide 34 to detach the guanine base from the RNA, forming a covalent enzyme-RNA intermediate. The proton acceptor active site deprotonates the incoming PreQ1, allowing a nucleophilic attack on the C1' of the ribose to form the product. After dissociation, two additional enzymatic reactions on the tRNA convert PreQ1 to queuine (Q), resulting in the hypermodified nucleoside queuosine (7-(((4,5-cis-dihydroxy-2-cyclopenten-1-yl)amino)methyl)-7-deazaguanosine). The polypeptide is Queuine tRNA-ribosyltransferase (Prochlorococcus marinus (strain MIT 9515)).